Reading from the N-terminus, the 209-residue chain is NAD(P)H-quinone oxidoreductase subunit I (209 aa).

2 consecutive 4Fe-4S ferredoxin-type domains span residues 55–84 and 95–124; these read GRIH…VDYE and NSYS…MTEE. [4Fe-4S] cluster contacts are provided by C64, C67, C70, C74, C104, C107, C110, and C114.

This sequence belongs to the complex I 23 kDa subunit family. NDH-1 is composed of at least 11 different subunits. The cofactor is [4Fe-4S] cluster.

It localises to the cell inner membrane. The enzyme catalyses a plastoquinone + NADH + (n+1) H(+)(in) = a plastoquinol + NAD(+) + n H(+)(out). The catalysed reaction is a plastoquinone + NADPH + (n+1) H(+)(in) = a plastoquinol + NADP(+) + n H(+)(out). Functionally, NDH-1 shuttles electrons from an unknown electron donor, via FMN and iron-sulfur (Fe-S) centers, to quinones in the respiratory and/or the photosynthetic chain. The immediate electron acceptor for the enzyme in this species is believed to be plastoquinone. Couples the redox reaction to proton translocation, and thus conserves the redox energy in a proton gradient. This chain is NAD(P)H-quinone oxidoreductase subunit I, found in Gloeobacter violaceus (strain ATCC 29082 / PCC 7421).